A 100-amino-acid chain; its full sequence is Small ribosomal subunit protein bS20 (100 aa).

Residues 1–22 (MASGKPKKKNPRLASGRKRARQ) show a composition bias toward basic residues. The tract at residues 1-26 (MASGKPKKKNPRLASGRKRARQGLKL) is disordered.

It belongs to the bacterial ribosomal protein bS20 family.

In terms of biological role, binds directly to 16S ribosomal RNA. This is Small ribosomal subunit protein bS20 from Acidovorax ebreus (strain TPSY) (Diaphorobacter sp. (strain TPSY)).